The chain runs to 138 residues: MLWFQGNSMQLARSSFGLFLRNCSASKTTLPVLTLFTKDPCPLCDEAKEVLKPYENRQPYKDQKLPGTRRRRSPSSPSHPHMASQSGKRYNLTLNQVLSFDYDMGLDAPKTISSDCGAFYCLRMFKSPDMTCCFYPKQ.

A disulfide bridge links C41 with C44. Residues 55–64 (ENRQPYKDQK) are compositionally biased toward basic and acidic residues. The interval 55–88 (ENRQPYKDQKLPGTRRRRSPSSPSHPHMASQSGK) is disordered.

It belongs to the glutaredoxin family. YDR286C subfamily.

This chain is Glutaredoxin-like protein C5orf63 (C5orf63), found in Homo sapiens (Human).